The primary structure comprises 95 residues: Aspartyl/glutamyl-tRNA(Asn/Gln) amidotransferase subunit C (95 aa).

The protein belongs to the GatC family. Heterotrimer of A, B and C subunits.

The catalysed reaction is L-glutamyl-tRNA(Gln) + L-glutamine + ATP + H2O = L-glutaminyl-tRNA(Gln) + L-glutamate + ADP + phosphate + H(+). It catalyses the reaction L-aspartyl-tRNA(Asn) + L-glutamine + ATP + H2O = L-asparaginyl-tRNA(Asn) + L-glutamate + ADP + phosphate + 2 H(+). Its function is as follows. Allows the formation of correctly charged Asn-tRNA(Asn) or Gln-tRNA(Gln) through the transamidation of misacylated Asp-tRNA(Asn) or Glu-tRNA(Gln) in organisms which lack either or both of asparaginyl-tRNA or glutaminyl-tRNA synthetases. The reaction takes place in the presence of glutamine and ATP through an activated phospho-Asp-tRNA(Asn) or phospho-Glu-tRNA(Gln). The polypeptide is Aspartyl/glutamyl-tRNA(Asn/Gln) amidotransferase subunit C (Rhodopseudomonas palustris (strain BisB18)).